Here is a 374-residue protein sequence, read N- to C-terminus: Putative L-lysine 2,3-aminomutase aq_1632 (374 aa).

The 229-residue stretch at histidine 86 to glutamate 314 folds into the Radical SAM core domain. Residues cysteine 100, cysteine 104, and cysteine 107 each contribute to the [4Fe-4S] cluster site. Lysine 317 is modified (N6-(pyridoxal phosphate)lysine).

Belongs to the radical SAM superfamily. KamA family. Requires [4Fe-4S] cluster as cofactor. The cofactor is pyridoxal 5'-phosphate.

The chain is Putative L-lysine 2,3-aminomutase aq_1632 from Aquifex aeolicus (strain VF5).